A 534-amino-acid polypeptide reads, in one-letter code: Serine/threonine-protein kinase Nek6 (534 aa).

Residues tyrosine 4 to leucine 257 form the Protein kinase domain. ATP is bound by residues isoleucine 10–alanine 18 and lysine 33. Aspartate 129 functions as the Proton acceptor in the catalytic mechanism. Disordered regions lie at residues lysine 278–alanine 306 and lysine 425–lysine 449.

This sequence belongs to the protein kinase superfamily. NEK Ser/Thr protein kinase family. NIMA subfamily. Interacts with DIS1. Post-translationally, ubiquitinated by the E3 ligase DIS1. Ubiquitination of NEK6 leads to its degradation via the 26S proteasome-dependent pathway. In terms of tissue distribution, expressed in anthers, pistils and leaves.

It localises to the cytoplasm. It carries out the reaction L-seryl-[protein] + ATP = O-phospho-L-seryl-[protein] + ADP + H(+). It catalyses the reaction L-threonyl-[protein] + ATP = O-phospho-L-threonyl-[protein] + ADP + H(+). In terms of biological role, may be involved in plant development processes. The protein is Serine/threonine-protein kinase Nek6 of Oryza sativa subsp. japonica (Rice).